We begin with the raw amino-acid sequence, 299 residues long: MTPTLPDIKPIPIKERSSVVFLGRGELDVIDGAFVLVDTNGIRMQIPVGGLASLMLEPGSRVSHAAVSLASKVGCLLVFVGEGGVRLYSVGHPGGARSDRLLYQARLALDEVLRLKVVKKMFSLRFGEDFSDAYSVEQLRGLEGVRVREGYRKIARDTGVIWNGRRYDPHSWGSADLPNRCLSAATASLYGICEAAVLAAGYSPSIGFLHTGKPLSFVYDIADLFKFETVVPAAFKTAALNPREPEREVRYACRDLFRETQLLKRIIPTIEEVLTAGGISAPAPPDWVVPPAIPVDEEG.

Mn(2+) is bound by residues glutamate 143, histidine 210, and aspartate 223.

The protein belongs to the CRISPR-associated endonuclease Cas1 family. As to quaternary structure, homodimer, forms a heterotetramer with a Cas2 homodimer. Mg(2+) serves as cofactor. Mn(2+) is required as a cofactor.

Its function is as follows. CRISPR (clustered regularly interspaced short palindromic repeat), is an adaptive immune system that provides protection against mobile genetic elements (viruses, transposable elements and conjugative plasmids). CRISPR clusters contain spacers, sequences complementary to antecedent mobile elements, and target invading nucleic acids. CRISPR clusters are transcribed and processed into CRISPR RNA (crRNA). Acts as a dsDNA endonuclease. Involved in the integration of spacer DNA into the CRISPR cassette. The polypeptide is CRISPR-associated endonuclease Cas1 3 (Methanospirillum hungatei JF-1 (strain ATCC 27890 / DSM 864 / NBRC 100397 / JF-1)).